Here is a 138-residue protein sequence, read N- to C-terminus: Small ribosomal subunit protein uS12 (138 aa).

A disordered region spans residues 33–55 (KEHTNVSSPQKRGVCTRVGTMTP). Asp-102 bears the 3-methylthioaspartic acid mark.

It belongs to the universal ribosomal protein uS12 family. Part of the 30S ribosomal subunit. Contacts proteins S8 and S17. May interact with IF1 in the 30S initiation complex.

Its function is as follows. With S4 and S5 plays an important role in translational accuracy. Interacts with and stabilizes bases of the 16S rRNA that are involved in tRNA selection in the A site and with the mRNA backbone. Located at the interface of the 30S and 50S subunits, it traverses the body of the 30S subunit contacting proteins on the other side and probably holding the rRNA structure together. The combined cluster of proteins S8, S12 and S17 appears to hold together the shoulder and platform of the 30S subunit. The sequence is that of Small ribosomal subunit protein uS12 from Bacillus velezensis (strain DSM 23117 / BGSC 10A6 / LMG 26770 / FZB42) (Bacillus amyloliquefaciens subsp. plantarum).